We begin with the raw amino-acid sequence, 229 residues long: Large ribosomal subunit protein uL1 (229 aa).

Belongs to the universal ribosomal protein uL1 family. As to quaternary structure, part of the 50S ribosomal subunit.

In terms of biological role, binds directly to 23S rRNA. The L1 stalk is quite mobile in the ribosome, and is involved in E site tRNA release. Protein L1 is also a translational repressor protein, it controls the translation of the L11 operon by binding to its mRNA. The sequence is that of Large ribosomal subunit protein uL1 from Bifidobacterium animalis subsp. lactis (strain AD011).